The primary structure comprises 818 residues: H(+)/Cl(-) exchange transporter 3 (818 aa).

Topologically, residues 1–125 are cytoplasmic; the sequence is MESEQLFHRG…WEMTKSLYDA (125 aa). 3 consecutive short sequence motifs (di-leucine internalization motif; mediates targeting to late endosome and lysosome membranes) follow at residues 28 to 29, 46 to 47, and 71 to 75; these read LL and LLDLL. Residues 126 to 163 traverse the membrane as a helical segment; that stretch reads WSGWLVVTLTGLASGALAGLIDIAADWMTDLKEGICLS. Residue N177 is glycosylated (N-linked (GlcNAc...) asparagine). A helical transmembrane segment spans residues 209–232; it reads MNYIMYIFWALSFAFLAVSLVKVF. Positions 238 to 242 match the Selectivity filter part_1 motif; the sequence is GSGIP. S239 serves as a coordination point for chloride. Residues 241–248 constitute an intramembrane region (helical); it reads IPEIKTIL. 2 helical membrane passes run 258 to 276 and 282 to 301; these read GKWTLMIKTITLVLAVASG and EGPLVHVACCCGNIFSYLFP. Positions 280–284 match the Selectivity filter part_2 motif; the sequence is GKEGP. 2 intramembrane regions (helical) span residues 313-325 and 329-337; these read VLSAASAAGVSVA and PIGGVLFSL. The next 3 helical transmembrane spans lie at 349-367, 391-416, and 423-443; these read LWRSFFAALVAAFVLRSIN, FPFILLGVFGGLWGAFFIRANIAWCR, and FGKYPVLEVIIVAAITAVIAF. N451 and N479 each carry an N-linked (GlcNAc...) asparagine glycan. The next 2 helical transmembrane spans lie at 500 to 520 and 525 to 544; these read IWQLCLALIFKIIMTVFTFGI and GLFIPSMAIGAIAGRIVGIA. Positions 525-529 match the Selectivity filter part_3 motif; it reads GLFIP. F527 contributes to the chloride binding site. 2 intramembrane regions (helical) span residues 572-586 and 590-601; these read GLYAMVGAAACLGGV and TVSLVVIVFELT. An intramembrane region (note=Loop between two helices) is located at residues 602-605; it reads GGLE. The helical transmembrane segment at 606–624 threads the bilayer; that stretch reads YIVPLMAAVMTSKWVGDAF. Topologically, residues 625–818 are cytoplasmic; sequence GREGIYEAHI…NQDPASIMFN (194 aa). Y630 contributes to the chloride binding site. CBS domains follow at residues 658–722 and 755–812; these read MRPR…ARKK and LDMS…NQDP. Residues 689–691 and 796–799 contribute to the ATP site; these read YNG and TKKD.

It belongs to the chloride channel (TC 2.A.49) family. ClC-3/CLCN3 subfamily. As to quaternary structure, monomer and homodimer. Forms heterodimers with CLCN4. In terms of assembly, interacts with GOPC, PDZK1 and NHERF1/EBP50. Post-translationally, N-glycosylated. In terms of tissue distribution, expressed primarily in tissues derived from neuroectoderm. Within the brain, its expression is particularly evident in the hippocampus, olfactory cortex, and olfactory bulb. Highly expressed in aortic and coronary vascular smooth muscle cells, and aortic endothelial cells. Also expressed in tracheal and alveolar epithelial cells, and intima and media of the pulmonary vessels. Expressed in bronchus and colon (at protein level).

It localises to the early endosome membrane. The protein resides in the late endosome membrane. Its subcellular location is the lysosome membrane. The protein localises to the cell membrane. It is found in the golgi apparatus membrane. It localises to the cell projection. The protein resides in the ruffle membrane. Strongly outwardly rectifying, electrogenic H(+)/Cl(-)exchanger which mediates the exchange of chloride ions against protons. The CLC channel family contains both chloride channels and proton-coupled anion transporters that exchange chloride or another anion for protons. The presence of conserved gating glutamate residues is typical for family members that function as antiporters. Functionally, strongly outwardly rectifying, electrogenic H(+)/Cl(-)exchanger which mediates the exchange of chloride ions against protons. In Homo sapiens (Human), this protein is H(+)/Cl(-) exchange transporter 3 (CLCN3).